The primary structure comprises 242 residues: Biosynthetic peptidoglycan transglycosylase (242 aa).

Residues 19–39 (LMVVLAIFWGGGIALFSVAPV) traverse the membrane as a helical segment.

The protein belongs to the glycosyltransferase 51 family.

It localises to the cell inner membrane. It catalyses the reaction [GlcNAc-(1-&gt;4)-Mur2Ac(oyl-L-Ala-gamma-D-Glu-L-Lys-D-Ala-D-Ala)](n)-di-trans,octa-cis-undecaprenyl diphosphate + beta-D-GlcNAc-(1-&gt;4)-Mur2Ac(oyl-L-Ala-gamma-D-Glu-L-Lys-D-Ala-D-Ala)-di-trans,octa-cis-undecaprenyl diphosphate = [GlcNAc-(1-&gt;4)-Mur2Ac(oyl-L-Ala-gamma-D-Glu-L-Lys-D-Ala-D-Ala)](n+1)-di-trans,octa-cis-undecaprenyl diphosphate + di-trans,octa-cis-undecaprenyl diphosphate + H(+). Its pathway is cell wall biogenesis; peptidoglycan biosynthesis. Peptidoglycan polymerase that catalyzes glycan chain elongation from lipid-linked precursors. This is Biosynthetic peptidoglycan transglycosylase from Escherichia coli O127:H6 (strain E2348/69 / EPEC).